A 639-amino-acid chain; its full sequence is Threonine--tRNA ligase (639 aa).

Residues 1-61 (MIHITLPDGS…TADCRLSIIT (61 aa)) form the TGS domain. The interval 242 to 533 (DHRKLGRELD…LLEQHAGALP (292 aa)) is catalytic. Cysteine 333, histidine 384, and histidine 510 together coordinate Zn(2+).

Belongs to the class-II aminoacyl-tRNA synthetase family. In terms of assembly, homodimer. The cofactor is Zn(2+).

The protein resides in the cytoplasm. The catalysed reaction is tRNA(Thr) + L-threonine + ATP = L-threonyl-tRNA(Thr) + AMP + diphosphate + H(+). Catalyzes the attachment of threonine to tRNA(Thr) in a two-step reaction: L-threonine is first activated by ATP to form Thr-AMP and then transferred to the acceptor end of tRNA(Thr). Also edits incorrectly charged L-seryl-tRNA(Thr). This chain is Threonine--tRNA ligase, found in Verminephrobacter eiseniae (strain EF01-2).